The sequence spans 182 residues: Small ribosomal subunit protein uS5 (182 aa).

Positions 16-79 (FVDRLVHINR…ESAKRGMIYV (64 aa)) constitute an S5 DRBM domain.

The protein belongs to the universal ribosomal protein uS5 family. Part of the 30S ribosomal subunit. Contacts proteins S4 and S8.

Its function is as follows. With S4 and S12 plays an important role in translational accuracy. Located at the back of the 30S subunit body where it stabilizes the conformation of the head with respect to the body. The protein is Small ribosomal subunit protein uS5 of Bartonella tribocorum (strain CIP 105476 / IBS 506).